The chain runs to 199 residues: 5'-deoxynucleotidase HDDC2 (199 aa).

Ala-2 is modified (N-acetylalanine). Ser-5 bears the Phosphoserine mark. The 103-residue stretch at 41 to 143 (VSDHMYRMAV…VKQLDQCEMI (103 aa)) folds into the HD domain. Positions 44, 72, 73, 76, 81, 82, and 138 each coordinate a divalent metal cation. Phosphoserine is present on Ser-199.

The protein belongs to the HDDC2 family. As to quaternary structure, homodimer. The cofactor is Mn(2+). Co(2+) serves as cofactor. Mg(2+) is required as a cofactor.

The enzyme catalyses a 2'-deoxyribonucleoside 5'-phosphate + H2O = a 2'-deoxyribonucleoside + phosphate. In terms of biological role, catalyzes the dephosphorylation of the nucleoside 5'-monophosphates deoxyadenosine monophosphate (dAMP), deoxycytidine monophosphate (dCMP), deoxyguanosine monophosphate (dGMP) and deoxythymidine monophosphate (dTMP). This Mus musculus (Mouse) protein is 5'-deoxynucleotidase HDDC2 (Hddc2).